The chain runs to 113 residues: HIG1 domain-containing protein C25B8.07c, mitochondrial (113 aa).

Residues 1–27 form a disordered region; that stretch reads MSSKLPKKSEENLELPTFPASEESLSR. The region spanning 12–103 is the HIG1 domain; sequence NLELPTFPAS…PPRREAPSNS (92 aa). Helical transmembrane passes span 39 to 59 and 75 to 95; these read PFIP…GYYI and VMSQ…IGPP.

It localises to the mitochondrion membrane. This is HIG1 domain-containing protein C25B8.07c, mitochondrial from Schizosaccharomyces pombe (strain 972 / ATCC 24843) (Fission yeast).